Here is a 130-residue protein sequence, read N- to C-terminus: Small ribosomal subunit protein uS9 (130 aa).

Residues 99 to 110 (KKAGFLTRDPRM) show a composition bias toward basic and acidic residues. The segment at 99–130 (KKAGFLTRDPRMKERKKYGLKKARRAPQFSKR) is disordered. Residues 111-130 (KERKKYGLKKARRAPQFSKR) show a composition bias toward basic residues.

The protein belongs to the universal ribosomal protein uS9 family.

In Clostridium botulinum (strain Alaska E43 / Type E3), this protein is Small ribosomal subunit protein uS9.